Consider the following 289-residue polypeptide: ATP synthase gamma chain (289 aa).

Belongs to the ATPase gamma chain family. F-type ATPases have 2 components, CF(1) - the catalytic core - and CF(0) - the membrane proton channel. CF(1) has five subunits: alpha(3), beta(3), gamma(1), delta(1), epsilon(1). CF(0) has three main subunits: a, b and c.

Its subcellular location is the cell inner membrane. In terms of biological role, produces ATP from ADP in the presence of a proton gradient across the membrane. The gamma chain is believed to be important in regulating ATPase activity and the flow of protons through the CF(0) complex. The protein is ATP synthase gamma chain of Herminiimonas arsenicoxydans.